A 124-amino-acid chain; its full sequence is Fluoride-specific ion channel FluC 2 (124 aa).

A run of 3 helical transmembrane segments spans residues 36–56 (TFLINVSGSVVMGLIAGYLAF), 66–86 (LFVMTGVLGGYTTFSAFSLDT), and 100–120 (LYAIGSVVLAVVGLFAGLALV). The Na(+) site is built by Gly74 and Thr77.

Belongs to the fluoride channel Fluc/FEX (TC 1.A.43) family.

It is found in the cell inner membrane. The catalysed reaction is fluoride(in) = fluoride(out). Na(+) is not transported, but it plays an essential structural role and its presence is essential for fluoride channel function. In terms of biological role, fluoride-specific ion channel. Important for reducing fluoride concentration in the cell, thus reducing its toxicity. This chain is Fluoride-specific ion channel FluC 2, found in Nitrobacter hamburgensis (strain DSM 10229 / NCIMB 13809 / X14).